The following is a 396-amino-acid chain: Elongation factor Tu (396 aa).

The 196-residue stretch at 10–205 (KPHVNIGTIG…AVDSYIPTPE (196 aa)) folds into the tr-type G domain. The G1 stretch occupies residues 19 to 26 (GHVDHGKT). 19-26 (GHVDHGKT) is a GTP binding site. A Mg(2+)-binding site is contributed by Thr-26. A G2 region spans residues 60–64 (GITIN). A G3 region spans residues 81-84 (DCPG). GTP contacts are provided by residues 81 to 85 (DCPGH) and 136 to 139 (NKCD). Positions 136–139 (NKCD) are G4. The interval 174 to 176 (SAK) is G5.

Belongs to the TRAFAC class translation factor GTPase superfamily. Classic translation factor GTPase family. EF-Tu/EF-1A subfamily. As to quaternary structure, monomer.

Its subcellular location is the cytoplasm. The catalysed reaction is GTP + H2O = GDP + phosphate + H(+). Its function is as follows. GTP hydrolase that promotes the GTP-dependent binding of aminoacyl-tRNA to the A-site of ribosomes during protein biosynthesis. The sequence is that of Elongation factor Tu from Brevibacillus brevis (strain 47 / JCM 6285 / NBRC 100599).